The primary structure comprises 411 residues: Dual-specificity RNA methyltransferase RlmN (411 aa).

Catalysis depends on Glu124, which acts as the Proton acceptor. A Radical SAM core domain is found at 130–379 (EEGRGTLCIS…IRTPRGRDIL (250 aa)). Cysteines 137 and 382 form a disulfide. Residues Cys144, Cys148, and Cys151 each contribute to the [4Fe-4S] cluster site. S-adenosyl-L-methionine-binding positions include 208–209 (GE), Ser240, 262–264 (SLH), and Asn339. The active-site S-methylcysteine intermediate is Cys382.

This sequence belongs to the radical SAM superfamily. RlmN family. It depends on [4Fe-4S] cluster as a cofactor.

The protein resides in the cytoplasm. The enzyme catalyses adenosine(2503) in 23S rRNA + 2 reduced [2Fe-2S]-[ferredoxin] + 2 S-adenosyl-L-methionine = 2-methyladenosine(2503) in 23S rRNA + 5'-deoxyadenosine + L-methionine + 2 oxidized [2Fe-2S]-[ferredoxin] + S-adenosyl-L-homocysteine. The catalysed reaction is adenosine(37) in tRNA + 2 reduced [2Fe-2S]-[ferredoxin] + 2 S-adenosyl-L-methionine = 2-methyladenosine(37) in tRNA + 5'-deoxyadenosine + L-methionine + 2 oxidized [2Fe-2S]-[ferredoxin] + S-adenosyl-L-homocysteine. Its function is as follows. Specifically methylates position 2 of adenine 2503 in 23S rRNA and position 2 of adenine 37 in tRNAs. m2A2503 modification seems to play a crucial role in the proofreading step occurring at the peptidyl transferase center and thus would serve to optimize ribosomal fidelity. In Sinorhizobium fredii (strain NBRC 101917 / NGR234), this protein is Dual-specificity RNA methyltransferase RlmN.